The primary structure comprises 309 residues: Homoserine kinase (309 aa).

Residue proline 91 to cysteine 101 coordinates ATP.

Belongs to the GHMP kinase family. Homoserine kinase subfamily.

Its subcellular location is the cytoplasm. It catalyses the reaction L-homoserine + ATP = O-phospho-L-homoserine + ADP + H(+). It functions in the pathway amino-acid biosynthesis; L-threonine biosynthesis; L-threonine from L-aspartate: step 4/5. Catalyzes the ATP-dependent phosphorylation of L-homoserine to L-homoserine phosphate. This chain is Homoserine kinase, found in Salmonella paratyphi B (strain ATCC BAA-1250 / SPB7).